The chain runs to 424 residues: Calreticulin-3 (424 aa).

Positions 1–28 (MGLPQNKLSFFCFFFLVSVLTLAPLAFS) are cleaved as a signal peptide. Residue asparagine 97 is glycosylated (N-linked (GlcNAc...) asparagine). Cysteine 114 and cysteine 146 form a disulfide bridge. Positions 118, 120, 137, and 144 each coordinate an alpha-D-glucoside. A run of 7 repeats spans residues 200 to 211 (REFGSMYTDWDI), 219 to 230 (VKNAKKPEDWDD), 236 to 247 (DPNDVKPEGFDS), 254 to 265 (DRKAKEPEDWDE), 269 to 279 (GLWEPPKIPNS), 283 to 293 (GPWKAKRIKNP), and 297 to 307 (GKWKNPWIDNP). The segment at 200-265 (REFGSMYTDW…KAKEPEDWDE (66 aa)) is 4 X approximate repeats. Positions 228–237 (WDDREYIDDP) are enriched in acidic residues. The disordered stretch occupies residues 228–275 (WDDREYIDDPNDVKPEGFDSIPREIPDRKAKEPEDWDEEENGLWEPPK). Positions 238 to 260 (NDVKPEGFDSIPREIPDRKAKEP) are enriched in basic and acidic residues. Residues 269 to 307 (GLWEPPKIPNSAYKGPWKAKRIKNPNYKGKWKNPWIDNP) are 3 X approximate repeats. An an alpha-D-glucoside-binding site is contributed by glutamate 327. Residues 368–401 (FAEAEKERKAREDEEARIAREEGERRRKERDHRY) show a composition bias toward basic and acidic residues. A disordered region spans residues 368-424 (FAEAEKERKAREDEEARIAREEGERRRKERDHRYGDRRRRYKRPNPRDYMDDYHDEL). The span at 402 to 411 (GDRRRRYKRP) shows a compositional bias: basic residues. Positions 412-424 (NPRDYMDDYHDEL) are enriched in basic and acidic residues. A Prevents secretion from ER motif is present at residues 421 to 424 (HDEL).

Belongs to the calreticulin family.

Its subcellular location is the endoplasmic reticulum lumen. Its function is as follows. Molecular calcium-binding chaperone promoting folding, oligomeric assembly and quality control in the ER via the calreticulin/calnexin cycle. This lectin may interact transiently with almost all of the monoglucosylated glycoproteins that are synthesized in the ER. Required for elongation factor Tu receptor (EFR) accumulation and for EFR, but not flagellin-sensing 2 (FLS2) signaling. This Arabidopsis thaliana (Mouse-ear cress) protein is Calreticulin-3 (CRT3).